Reading from the N-terminus, the 165-residue chain is Cysteine and tyrosine-rich protein 1 (165 aa).

An N-terminal signal peptide occupies residues 1–29 (MDALRLPRRLGVLLWKVVLLFVYAEDCRA). The Extracellular portion of the chain corresponds to 30 to 61 (QCGKDCRAYCCNGSTPHCCSYYAYIGSILSGT). The helical transmembrane segment at 62-82 (AIAGIVFGIVFIMGVIAGIAI) threads the bilayer. Residues 83–165 (CICMCMKNNR…SSSQNRICNN (83 aa)) are Cytoplasmic-facing. Positions 127 to 165 (DLPPPYSPAPQASAQRSPPPPYPGNSRKYSSSQNRICNN) are disordered. Positions 153–165 (RKYSSSQNRICNN) are enriched in polar residues.

Belongs to the CYYR1 family.

It localises to the membrane. The sequence is that of Cysteine and tyrosine-rich protein 1 (Cyyr1) from Rattus norvegicus (Rat).